The following is a 158-amino-acid chain: Large ribosomal subunit protein bL35m (158 aa).

The protein belongs to the bacterial ribosomal protein bL35 family.

The protein resides in the mitochondrion. This chain is Large ribosomal subunit protein bL35m (mrpl-35), found in Caenorhabditis elegans.